Consider the following 208-residue polypeptide: Octanoyltransferase (208 aa).

The BPL/LPL catalytic domain occupies 30-208 (GTASEAVFIL…ILKQEFYKIF (179 aa)). Substrate is bound by residues 69–76 (RGGKFTYH), 142–144 (SIG), and 155–157 (GVA). The Acyl-thioester intermediate role is filled by cysteine 173.

It belongs to the LipB family.

The protein resides in the cytoplasm. It carries out the reaction octanoyl-[ACP] + L-lysyl-[protein] = N(6)-octanoyl-L-lysyl-[protein] + holo-[ACP] + H(+). It functions in the pathway protein modification; protein lipoylation via endogenous pathway; protein N(6)-(lipoyl)lysine from octanoyl-[acyl-carrier-protein]: step 1/2. In terms of biological role, catalyzes the transfer of endogenously produced octanoic acid from octanoyl-acyl-carrier-protein onto the lipoyl domains of lipoate-dependent enzymes. Lipoyl-ACP can also act as a substrate although octanoyl-ACP is likely to be the physiological substrate. This is Octanoyltransferase from Orientia tsutsugamushi (strain Boryong) (Rickettsia tsutsugamushi).